Here is a 371-residue protein sequence, read N- to C-terminus: MRPFVTDARRVVVKVGSSSLTTAAGGLDVDRLEALVAAVLPRAGQQLVLVSSGAIAAGLAPLGLARRPRDLATQQAAASVGQSSLVHSYAAAFGRAGHQVGQVLLTATDVIRRTHYRNARTALDRLLELDVIPIINENDAVATQEIRVGDNDRLAAIVAHLVSADLLVLLSDVDGLYDANPRLGPATMVREVRSDTDLDGLTARGTGTAGVGVGGMATKIEAARMAASGGVTAIITSAANAAPVLRGEEVGTVFHPTGSRRASRLLWLAHATAPEGRLHLDSGAVAAVVRRRASLLPAGITGVEGDFAAGDPVDLVDPDGRSVARGLVAFDAAELPVMLGRSTADLAMELGPSYEREIVHRDDLVLLLPAR.

K14 lines the ATP pocket. Substrate is bound by residues S52, D139, and N151. 171-172 (SD) provides a ligand contact to ATP. Positions 275-353 (EGRLHLDSGA…ADLAMELGPS (79 aa)) constitute a PUA domain.

Belongs to the glutamate 5-kinase family.

Its subcellular location is the cytoplasm. The catalysed reaction is L-glutamate + ATP = L-glutamyl 5-phosphate + ADP. It participates in amino-acid biosynthesis; L-proline biosynthesis; L-glutamate 5-semialdehyde from L-glutamate: step 1/2. In terms of biological role, catalyzes the transfer of a phosphate group to glutamate to form L-glutamate 5-phosphate. This chain is Glutamate 5-kinase, found in Frankia casuarinae (strain DSM 45818 / CECT 9043 / HFP020203 / CcI3).